The sequence spans 458 residues: Sugar transporter ERD6-like 10 (458 aa).

Transmembrane regions (helical) follow at residues 17–37 (ITAC…SYGC), 66–86 (FLNL…VILG), 96–116 (LFCI…WLDL), 119–139 (ISLG…IAEI), 150–170 (ASTL…GTVI), 174–194 (VLAV…YFIP), 257–277 (LVVG…GITY), 292–312 (LGSM…LILV), 319–339 (PLLL…GVSF), 350–370 (FIPV…AIGI), 393–413 (IVAL…NFMF), and 419–439 (GTFY…WMLV).

This sequence belongs to the major facilitator superfamily. Sugar transporter (TC 2.A.1.1) family.

The protein resides in the membrane. Its function is as follows. Sugar transporter. The sequence is that of Sugar transporter ERD6-like 10 from Arabidopsis thaliana (Mouse-ear cress).